The following is a 105-amino-acid chain: Small ribosomal subunit protein uS10 (105 aa).

The protein belongs to the universal ribosomal protein uS10 family. As to quaternary structure, part of the 30S ribosomal subunit.

In terms of biological role, involved in the binding of tRNA to the ribosomes. This chain is Small ribosomal subunit protein uS10, found in Trichodesmium erythraeum (strain IMS101).